The chain runs to 216 residues: ATP phosphoribosyltransferase (216 aa).

The protein belongs to the ATP phosphoribosyltransferase family. Short subfamily. Heteromultimer composed of HisG and HisZ subunits.

The protein resides in the cytoplasm. It catalyses the reaction 1-(5-phospho-beta-D-ribosyl)-ATP + diphosphate = 5-phospho-alpha-D-ribose 1-diphosphate + ATP. It participates in amino-acid biosynthesis; L-histidine biosynthesis; L-histidine from 5-phospho-alpha-D-ribose 1-diphosphate: step 1/9. In terms of biological role, catalyzes the condensation of ATP and 5-phosphoribose 1-diphosphate to form N'-(5'-phosphoribosyl)-ATP (PR-ATP). Has a crucial role in the pathway because the rate of histidine biosynthesis seems to be controlled primarily by regulation of HisG enzymatic activity. The polypeptide is ATP phosphoribosyltransferase (Microcystis aeruginosa (strain NIES-843 / IAM M-2473)).